Reading from the N-terminus, the 363-residue chain is 3-dehydroquinate synthase (363 aa).

Residues 75-80 (DAEEGK), 109-113 (GAVTD), 133-134 (TS), Lys-146, Lys-155, and 173-176 (TLDT) contribute to the NAD(+) site. Zn(2+) contacts are provided by Glu-188, His-251, and His-267.

The protein belongs to the sugar phosphate cyclases superfamily. Dehydroquinate synthase family. The cofactor is Co(2+). Requires Zn(2+) as cofactor. NAD(+) serves as cofactor.

The protein resides in the cytoplasm. The enzyme catalyses 7-phospho-2-dehydro-3-deoxy-D-arabino-heptonate = 3-dehydroquinate + phosphate. It functions in the pathway metabolic intermediate biosynthesis; chorismate biosynthesis; chorismate from D-erythrose 4-phosphate and phosphoenolpyruvate: step 2/7. Functionally, catalyzes the conversion of 3-deoxy-D-arabino-heptulosonate 7-phosphate (DAHP) to dehydroquinate (DHQ). This Pseudarthrobacter chlorophenolicus (strain ATCC 700700 / DSM 12829 / CIP 107037 / JCM 12360 / KCTC 9906 / NCIMB 13794 / A6) (Arthrobacter chlorophenolicus) protein is 3-dehydroquinate synthase.